The primary structure comprises 697 residues: PHD finger protein At2g01810 (697 aa).

Disordered regions lie at residues 319 to 362 (DENS…QYYS) and 457 to 478 (EQKRKKKRKVKPQETSECTSTT). Positions 339–349 (SGRDTVLDDHN) are enriched in basic and acidic residues. The PHD-type zinc finger occupies 635–685 (TVDCKCGARDDDGERMVACDACKVWHHTLCNSIEDDEAVPSVFLCNMCYGD).

It is found in the nucleus. The polypeptide is PHD finger protein At2g01810 (Arabidopsis thaliana (Mouse-ear cress)).